Here is a 196-residue protein sequence, read N- to C-terminus: Protein GrpE (196 aa).

The segment covering 1 to 26 (MQEPHNQEPIEEQKLSEMEDTLEKQH) has biased composition (basic and acidic residues). A disordered region spans residues 1-40 (MQEPHNQEPIEEQKLSEMEDTLEKQHSGASTENTERAEEG).

This sequence belongs to the GrpE family. In terms of assembly, homodimer.

Its subcellular location is the cytoplasm. Its function is as follows. Participates actively in the response to hyperosmotic and heat shock by preventing the aggregation of stress-denatured proteins, in association with DnaK and GrpE. It is the nucleotide exchange factor for DnaK and may function as a thermosensor. Unfolded proteins bind initially to DnaJ; upon interaction with the DnaJ-bound protein, DnaK hydrolyzes its bound ATP, resulting in the formation of a stable complex. GrpE releases ADP from DnaK; ATP binding to DnaK triggers the release of the substrate protein, thus completing the reaction cycle. Several rounds of ATP-dependent interactions between DnaJ, DnaK and GrpE are required for fully efficient folding. The sequence is that of Protein GrpE from Nitrosomonas eutropha (strain DSM 101675 / C91 / Nm57).